Reading from the N-terminus, the 83-residue chain is ATP synthase subunit c, chloroplastic (83 aa).

Transmembrane regions (helical) follow at residues 3 to 23 and 57 to 77; these read PIISAASVIAAGLSVGLAAIG and LAFMEALTIYGLVVALSLLFA.

The protein belongs to the ATPase C chain family. In terms of assembly, F-type ATPases have 2 components, F(1) - the catalytic core - and F(0) - the membrane proton channel. F(1) has five subunits: alpha(3), beta(3), gamma(1), delta(1), epsilon(1). F(0) has four main subunits: a(1), b(1), b'(1) and c(10-14). The alpha and beta chains form an alternating ring which encloses part of the gamma chain. F(1) is attached to F(0) by a central stalk formed by the gamma and epsilon chains, while a peripheral stalk is formed by the delta, b and b' chains.

It localises to the plastid. The protein localises to the chloroplast thylakoid membrane. Its function is as follows. F(1)F(0) ATP synthase produces ATP from ADP in the presence of a proton or sodium gradient. F-type ATPases consist of two structural domains, F(1) containing the extramembraneous catalytic core and F(0) containing the membrane proton channel, linked together by a central stalk and a peripheral stalk. During catalysis, ATP synthesis in the catalytic domain of F(1) is coupled via a rotary mechanism of the central stalk subunits to proton translocation. Key component of the F(0) channel; it plays a direct role in translocation across the membrane. A homomeric c-ring of between 10-14 subunits forms the central stalk rotor element with the F(1) delta and epsilon subunits. This Diacronema lutheri (Unicellular marine alga) protein is ATP synthase subunit c, chloroplastic.